The sequence spans 574 residues: Calcium-dependent protein kinase 9 (574 aa).

The interval 1–64 (MGNTCCVAPA…RARAKPNPYD (64 aa)) is disordered. A lipid anchor (N-myristoyl glycine) is attached at G2. Residues 28 to 40 (KSPAPSATTTTAT) show a composition bias toward low complexity. The Protein kinase domain occupies 101–359 (YQLGRELGRG…AQQVLDHPWL (259 aa)). ATP-binding positions include 107–115 (LGRGEFGVT) and K130. Catalysis depends on D225, which acts as the Proton acceptor. The interval 365 to 395 (APNVPLGDVVRARLKQFSLMNRLKKKAMRVI) is autoinhibitory domain. 4 EF-hand domains span residues 402-437 (EEVEVIKDMFALMDTDNNGRVTLQELKDGLTKVGSK), 438-473 (LAEPEMELLMEAADVDGNGYLDYGEFVAVTIHLQRL), 474-509 (SNDNHLRTAFLFFDKDGSGYIDRAELADALADDSGH), and 510-545 (ADDAVLDHILREVDTDKDGRISYEEFVAMMKSGTDW). D415, D417, N419, R421, E426, D451, D453, N455, Y457, E462, D487, D489, S491, Y493, E498, D523, D525, D527, R529, and E534 together coordinate Ca(2+).

This sequence belongs to the protein kinase superfamily. Ser/Thr protein kinase family. CDPK subfamily. In terms of tissue distribution, expressed in leaf blades and stems. Expressed at low levels in anthers and spikelets.

Its subcellular location is the membrane. The catalysed reaction is L-seryl-[protein] + ATP = O-phospho-L-seryl-[protein] + ADP + H(+). It carries out the reaction L-threonyl-[protein] + ATP = O-phospho-L-threonyl-[protein] + ADP + H(+). With respect to regulation, activated by calcium. Autophosphorylation may play an important role in the regulation of the kinase activity. May play a role in signal transduction pathways that involve calcium as a second messenger. Functions in signal transduction pathways that positively regulate responses to drought, osmotic, and dehydration stress. Regulates expression of stress-associated genes in response to drought. Involved in tolerance to drought stress by increasing proline and soluble sugars, and improving stomatal closure. Required for pollen maturation and spikelet fertility. This chain is Calcium-dependent protein kinase 9, found in Oryza sativa subsp. japonica (Rice).